Consider the following 185-residue polypeptide: Protein DP71L (185 aa).

Positions 1 to 15 (MSRRNKKRSRRRRKK) are enriched in basic residues. The segment at 1-38 (MSRRNKKRSRRRRKKPLNDIQPGPSKSSAQDEPIKSVS) is disordered. 2 important for host CHOP inhibition regions span residues 126–128 (VHF) and 170–174 (LSTVF).

Belongs to the asfivirus DP71L family. As to quaternary structure, interacts (via C-terminus) with host PPP1CB.

Its function is as follows. Interacts with the host phosphatase PP1 catalytic subunit (PPP1CB) and recruits it to dephosphorylate EIF2S1/eIF2alpha and therefore restores the host translation that has been shut-down by the host. Also inhibits the EIF2S1/eIF2alpha-ATF4-DDIT3/CHOP pathway. The polypeptide is Protein DP71L (African swine fever virus (isolate Pig/Kenya/KEN-50/1950) (ASFV)).